A 176-amino-acid chain; its full sequence is Ribosome maturation factor RimM (176 aa).

A PRC barrel domain is found at 102-175 (KNDYYWNDII…TDKKFILVQW (74 aa)).

It belongs to the RimM family. As to quaternary structure, binds ribosomal protein uS19.

Its subcellular location is the cytoplasm. Its function is as follows. An accessory protein needed during the final step in the assembly of 30S ribosomal subunit, possibly for assembly of the head region. Essential for efficient processing of 16S rRNA. May be needed both before and after RbfA during the maturation of 16S rRNA. It has affinity for free ribosomal 30S subunits but not for 70S ribosomes. In Buchnera aphidicola subsp. Acyrthosiphon pisum (strain APS) (Acyrthosiphon pisum symbiotic bacterium), this protein is Ribosome maturation factor RimM.